A 109-amino-acid chain; its full sequence is Large ribosomal subunit protein uL24 (109 aa).

Belongs to the universal ribosomal protein uL24 family. In terms of assembly, part of the 50S ribosomal subunit.

Functionally, one of two assembly initiator proteins, it binds directly to the 5'-end of the 23S rRNA, where it nucleates assembly of the 50S subunit. One of the proteins that surrounds the polypeptide exit tunnel on the outside of the subunit. This is Large ribosomal subunit protein uL24 from Ehrlichia canis (strain Jake).